A 788-amino-acid chain; its full sequence is Endonuclease MutS2 (788 aa).

332–339 (GPNTGGKT) contacts ATP. One can recognise a Smr domain in the interval 713–788 (IDLRGLDSEE…GTGVTVVELK (76 aa)).

It belongs to the DNA mismatch repair MutS family. MutS2 subfamily. Homodimer. Binds to stalled ribosomes, contacting rRNA.

In terms of biological role, endonuclease that is involved in the suppression of homologous recombination and thus may have a key role in the control of bacterial genetic diversity. Functionally, acts as a ribosome collision sensor, splitting the ribosome into its 2 subunits. Detects stalled/collided 70S ribosomes which it binds and splits by an ATP-hydrolysis driven conformational change. Acts upstream of the ribosome quality control system (RQC), a ribosome-associated complex that mediates the extraction of incompletely synthesized nascent chains from stalled ribosomes and their subsequent degradation. Probably generates substrates for RQC. The protein is Endonuclease MutS2 of Clostridium acetobutylicum (strain ATCC 824 / DSM 792 / JCM 1419 / IAM 19013 / LMG 5710 / NBRC 13948 / NRRL B-527 / VKM B-1787 / 2291 / W).